The chain runs to 522 residues: Protein nucleotidyltransferase YdiU (522 aa).

ATP is bound by residues Gly109, Gly111, Arg112, Lys132, Asp144, Gly145, Arg195, and Arg202. Residue Asp271 is the Proton acceptor of the active site. The Mg(2+) site is built by Asn272 and Asp281. Residue Asp281 coordinates ATP.

It belongs to the SELO family. Mg(2+) is required as a cofactor. It depends on Mn(2+) as a cofactor.

It catalyses the reaction L-seryl-[protein] + ATP = 3-O-(5'-adenylyl)-L-seryl-[protein] + diphosphate. It carries out the reaction L-threonyl-[protein] + ATP = 3-O-(5'-adenylyl)-L-threonyl-[protein] + diphosphate. The catalysed reaction is L-tyrosyl-[protein] + ATP = O-(5'-adenylyl)-L-tyrosyl-[protein] + diphosphate. The enzyme catalyses L-histidyl-[protein] + UTP = N(tele)-(5'-uridylyl)-L-histidyl-[protein] + diphosphate. It catalyses the reaction L-seryl-[protein] + UTP = O-(5'-uridylyl)-L-seryl-[protein] + diphosphate. It carries out the reaction L-tyrosyl-[protein] + UTP = O-(5'-uridylyl)-L-tyrosyl-[protein] + diphosphate. Nucleotidyltransferase involved in the post-translational modification of proteins. It can catalyze the addition of adenosine monophosphate (AMP) or uridine monophosphate (UMP) to a protein, resulting in modifications known as AMPylation and UMPylation. In Burkholderia orbicola (strain MC0-3), this protein is Protein nucleotidyltransferase YdiU.